We begin with the raw amino-acid sequence, 899 residues long: Valine--tRNA ligase (899 aa).

Residues 60–70 (PNVTGVLHMGH) carry the 'HIGH' region motif. The 'KMSKS' region signature appears at 539-543 (KMSKS). Position 542 (K542) interacts with ATP. Residues 827–898 (AGLIDLDEEQ…KQGLEKLAAL (72 aa)) adopt a coiled-coil conformation.

This sequence belongs to the class-I aminoacyl-tRNA synthetase family. ValS type 1 subfamily. Monomer.

It is found in the cytoplasm. It catalyses the reaction tRNA(Val) + L-valine + ATP = L-valyl-tRNA(Val) + AMP + diphosphate. Catalyzes the attachment of valine to tRNA(Val). As ValRS can inadvertently accommodate and process structurally similar amino acids such as threonine, to avoid such errors, it has a 'posttransfer' editing activity that hydrolyzes mischarged Thr-tRNA(Val) in a tRNA-dependent manner. This chain is Valine--tRNA ligase, found in Syntrophotalea carbinolica (strain DSM 2380 / NBRC 103641 / GraBd1) (Pelobacter carbinolicus).